A 233-amino-acid polypeptide reads, in one-letter code: Ribonuclease 3 (233 aa).

In terms of domain architecture, RNase III spans 5 to 127 (LERLCRKLGY…VIGAVYLDGG (123 aa)). Residue E40 participates in Mg(2+) binding. Residue D44 is part of the active site. The Mg(2+) site is built by D113 and E116. E116 is an active-site residue. Residues 156 to 226 (DPKTRLQEYL…ATRALALLLA (71 aa)) enclose the DRBM domain.

The protein belongs to the ribonuclease III family. As to quaternary structure, homodimer. Requires Mg(2+) as cofactor.

The protein localises to the cytoplasm. It catalyses the reaction Endonucleolytic cleavage to 5'-phosphomonoester.. Functionally, digests double-stranded RNA. Involved in the processing of primary rRNA transcript to yield the immediate precursors to the large and small rRNAs (23S and 16S). Processes some mRNAs, and tRNAs when they are encoded in the rRNA operon. Processes pre-crRNA and tracrRNA of type II CRISPR loci if present in the organism. This chain is Ribonuclease 3, found in Nitrosococcus oceani (strain ATCC 19707 / BCRC 17464 / JCM 30415 / NCIMB 11848 / C-107).